Here is an 87-residue protein sequence, read N- to C-terminus: Cell division topological specificity factor (87 aa).

This sequence belongs to the MinE family.

In terms of biological role, prevents the cell division inhibition by proteins MinC and MinD at internal division sites while permitting inhibition at polar sites. This ensures cell division at the proper site by restricting the formation of a division septum at the midpoint of the long axis of the cell. This Acidiphilium cryptum (strain JF-5) protein is Cell division topological specificity factor.